The sequence spans 334 residues: Glyceraldehyde-3-phosphate dehydrogenase (334 aa).

Residues 11–12 (RI), D33, and S119 contribute to the NAD(+) site. Residues 149–151 (SCT) and T180 contribute to the D-glyceraldehyde 3-phosphate site. The active-site Nucleophile is the C150. Residue N181 participates in NAD(+) binding. D-glyceraldehyde 3-phosphate contacts are provided by residues R197, 210–211 (TG), and R233. Residue N314 coordinates NAD(+).

The protein belongs to the glyceraldehyde-3-phosphate dehydrogenase family. As to quaternary structure, homotetramer.

The protein resides in the cytoplasm. It carries out the reaction D-glyceraldehyde 3-phosphate + phosphate + NAD(+) = (2R)-3-phospho-glyceroyl phosphate + NADH + H(+). It participates in carbohydrate degradation; glycolysis; pyruvate from D-glyceraldehyde 3-phosphate: step 1/5. Its function is as follows. Catalyzes the oxidative phosphorylation of glyceraldehyde 3-phosphate (G3P) to 1,3-bisphosphoglycerate (BPG) using the cofactor NAD. The first reaction step involves the formation of a hemiacetal intermediate between G3P and a cysteine residue, and this hemiacetal intermediate is then oxidized to a thioester, with concomitant reduction of NAD to NADH. The reduced NADH is then exchanged with the second NAD, and the thioester is attacked by a nucleophilic inorganic phosphate to produce BPG. In Clostridium pasteurianum, this protein is Glyceraldehyde-3-phosphate dehydrogenase (gap).